A 128-amino-acid chain; its full sequence is MRFALTVTGPAYGTQQASSAWQFAQAVLQEGHELACVFFYREGVLNANQLTAPASDEFDLVRGWQSLHDEHGVALHICVAAALRRGVTDEREAQQLALPGHNLQPGFTLSGLGALAEAALTCDRMVQF.

C78 functions as the Cysteine persulfide intermediate in the catalytic mechanism.

It belongs to the DsrE/TusD family. Heterohexamer, formed by a dimer of trimers. The hexameric TusBCD complex contains 2 copies each of TusB, TusC and TusD. The TusBCD complex interacts with TusE.

The protein localises to the cytoplasm. In terms of biological role, part of a sulfur-relay system required for 2-thiolation of 5-methylaminomethyl-2-thiouridine (mnm(5)s(2)U) at tRNA wobble positions. Accepts sulfur from TusA and transfers it in turn to TusE. The sequence is that of Sulfurtransferase TusD from Klebsiella pneumoniae subsp. pneumoniae (strain ATCC 700721 / MGH 78578).